We begin with the raw amino-acid sequence, 86 residues long: Photosystem I reaction center subunit PsaK (86 aa).

2 helical membrane passes run 14 to 34 and 57 to 77; these read LQWSPTVGLIIIIANIIAIAF and FGLPALLATTAFGHILGVGAV.

It belongs to the PsaG/PsaK family.

It localises to the cellular thylakoid membrane. This Nostoc punctiforme (strain ATCC 29133 / PCC 73102) protein is Photosystem I reaction center subunit PsaK.